The chain runs to 185 residues: Elongation factor P (185 aa).

This sequence belongs to the elongation factor P family.

The protein resides in the cytoplasm. The protein operates within protein biosynthesis; polypeptide chain elongation. In terms of biological role, involved in peptide bond synthesis. Stimulates efficient translation and peptide-bond synthesis on native or reconstituted 70S ribosomes in vitro. Probably functions indirectly by altering the affinity of the ribosome for aminoacyl-tRNA, thus increasing their reactivity as acceptors for peptidyl transferase. The sequence is that of Elongation factor P from Desulfovibrio desulfuricans (strain ATCC 27774 / DSM 6949 / MB).